The chain runs to 319 residues: Sulfate adenylyltransferase subunit 2 (319 aa).

This sequence belongs to the PAPS reductase family. CysD subfamily. As to quaternary structure, heterodimer composed of CysD, the smaller subunit, and CysN.

The catalysed reaction is sulfate + ATP + H(+) = adenosine 5'-phosphosulfate + diphosphate. It participates in sulfur metabolism; hydrogen sulfide biosynthesis; sulfite from sulfate: step 1/3. In terms of biological role, with CysN forms the ATP sulfurylase (ATPS) that catalyzes the adenylation of sulfate producing adenosine 5'-phosphosulfate (APS) and diphosphate, the first enzymatic step in sulfur assimilation pathway. APS synthesis involves the formation of a high-energy phosphoric-sulfuric acid anhydride bond driven by GTP hydrolysis by CysN coupled to ATP hydrolysis by CysD. The chain is Sulfate adenylyltransferase subunit 2 from Methylobacterium radiotolerans (strain ATCC 27329 / DSM 1819 / JCM 2831 / NBRC 15690 / NCIMB 10815 / 0-1).